Consider the following 224-residue polypeptide: Transcriptional regulatory protein DltR (224 aa).

In terms of domain architecture, Response regulatory spans 2 to 116 (RLLVVEDEKS…ELLARIRLRT (115 aa)). Position 51 is a 4-aspartylphosphate (aspartate 51). The ompR/PhoB-type DNA-binding region spans 124–222 (ANQLRLGNIR…TKGFGYSLEE (99 aa)).

Phosphorylated by DltS.

The protein localises to the cytoplasm. Member of the two-component regulatory system DltS/DltR. Regulates the expression of the dlt operon. This is Transcriptional regulatory protein DltR (dltR) from Streptococcus agalactiae serotype III (strain NEM316).